A 799-amino-acid polypeptide reads, in one-letter code: Integrin beta-1 (799 aa).

The N-terminal stretch at 1 to 20 (MNLQLVFWIGLISLICSVFG) is a signal peptide. Residues 21 to 729 (QTDKNRCLKA…ETPDCPTGPD (709 aa)) are Extracellular-facing. The PSI domain occupies 26 to 76 (RCLKANAKSCGECIQAGPNCGWCTNTTFLQEGMPTSARCDDLEALKKKGCH). 28 disulfides stabilise this stretch: Cys-27–Cys-45, Cys-35–Cys-465, Cys-38–Cys-64, Cys-48–Cys-75, Cys-207–Cys-213, Cys-261–Cys-301, Cys-401–Cys-415, Cys-435–Cys-463, Cys-467–Cys-487, Cys-478–Cys-490, Cys-492–Cys-501, Cys-503–Cys-534, Cys-517–Cys-532, Cys-526–Cys-537, Cys-539–Cys-554, Cys-556–Cys-577, Cys-561–Cys-575, Cys-569–Cys-580, Cys-582–Cys-591, Cys-593–Cys-616, Cys-600–Cys-614, Cys-608–Cys-619, Cys-621–Cys-631, Cys-634–Cys-637, Cys-641–Cys-692, Cys-647–Cys-666, Cys-650–Cys-662, and Cys-700–Cys-724. 3 N-linked (GlcNAc...) asparagine glycosylation sites follow: Asn-50, Asn-94, and Asn-97. The region spanning 140–378 (DYPIDLYYLM…QLIIDAYNSL (239 aa)) is the VWFA domain. Mg(2+) contacts are provided by Ser-152 and Ser-154. The Ca(2+) site is built by Ser-154, Asp-157, Asp-158, and Glu-189. The interval 207-213 (CTSEQNC) is CX3CL1-binding. Residue Asn-212 is glycosylated (N-linked (GlcNAc...) asparagine). 4 residues coordinate Ca(2+): Asn-244, Asp-246, Pro-248, and Glu-249. Glu-249 provides a ligand contact to Mg(2+). Residue Asn-269 is glycosylated (N-linked (GlcNAc...) asparagine). Residues 295-314 (LPNDGQCHLENNVYTMSHYY) are CX3CL1-binding. Gly-362 serves as a coordination point for Ca(2+). 3 N-linked (GlcNAc...) asparagine glycosylation sites follow: Asn-363, Asn-406, and Asn-417. The interval 383-466 (ILENSKLPDG…VVLQFICKCN (84 aa)) is interaction with TMEM182. I-EGF domains are found at residues 467 to 502 (CQSH…RHCE), 503 to 555 (CSTD…KFCE), 556 to 592 (CDNF…SACD), and 593 to 632 (CSLD…PTCE). Asn-482 carries N-linked (GlcNAc...) asparagine glycosylation. N-linked (GlcNAc...) asparagine glycosylation occurs at Asn-521. The N-linked (GlcNAc...) asparagine glycan is linked to Asn-585. Asn-670 carries N-linked (GlcNAc...) asparagine glycosylation. Residues 730-752 (IIPIVAGVVAGIVLIGLALLLIW) traverse the membrane as a helical segment. Topologically, residues 753-799 (KLLMIIHDRREFAKFEKEKMNAKWDTGENPIYKSAVTTVVNPKYEGK) are cytoplasmic. Residues 763 to 768 (EFAKFE) form a signal for sorting from recycling endosomes; interaction with ACAP1 region. Phosphothreonine is present on Thr-778. Tyr-784 is modified (phosphotyrosine). A Phosphoserine modification is found at Ser-786. Residues 786–793 (SAVTTVVN) form an interaction with ITGB1BP1 region. Position 790 is a phosphothreonine (Thr-790). Residue Lys-795 is modified to N6-acetyllysine; alternate. Lys-795 is covalently cross-linked (Glycyl lysine isopeptide (Lys-Gly) (interchain with G-Cter in SUMO1); alternate).

Belongs to the integrin beta chain family. Interacts with seprase FAP (seprase); the interaction occurs at the cell surface of invadopodia membrane in a collagen-dependent manner. Heterodimer of an alpha and a beta subunit. Beta-1 associates with either alpha-1, alpha-2, alpha-3, alpha-4, alpha-5, alpha-6, alpha-7, alpha-8, alpha-9, alpha-10, alpha-11 or alpha-V. ITGA6:ITGB1 is found in a complex with CD9; interaction takes place in oocytes and is involved in sperm-egg fusion. Binds LGALS3BP and NMRK2, when associated with alpha-7, but not with alpha-5. Interacts with FLNA, FLNB, FLNC and RANBP9. Interacts with KRT1 in the presence of RACK1 and SRC. Interacts with JAML; integrin alpha-4/beta-1 may regulate leukocyte to endothelial cells adhesion by controlling JAML homodimerization. Interacts with RAB21. Interacts (via the cytoplasmic region) with RAB25 (via the hypervariable C-terminal region). Interacts with MYO10. Interacts with ITGB1BP1 (via C-terminal region); the interaction is a prerequisite for focal adhesion disassembly. Interacts with TLN1; the interaction is prevented by competitive binding of ITGB1BP1. Interacts with ACAP1; required for ITGB1 recycling. Interacts with ASAP3. Interacts with FERMT2; the interaction is inhibited in presence of ITGB1BP1. Interacts with DAB2. Interacts with FGR and HCK. Interacts with alpha-7A and alpha-7B in adult skeletal muscle. Interacts with alpha-7B in cardiomyocytes of adult heart. Interacts with EMP2; the interaction may be direct or indirect and ITGB1 has a heterodimer form. ITGA5:ITGB1 interacts with CCN3. ITGA4:ITGB1 is found in a ternary complex with CX3CR1 and CX3CL1. ITGA5:ITGB1 interacts with FBN1. ITGA5:ITGB1 acts as a receptor for fibronectin FN1 and mediates R-G-D-dependent cell adhesion to FN1. ITGA5:ITGB1 interacts with IL1B. Interacts with MDK. ITGA4:ITGB1 interacts with MDK; this interaction mediates MDK-induced osteoblast cells migration through PXN phosphorylation. ITGA6:ITGB1 interacts with MDK; this interaction mediates MDK-induced neurite-outgrowth. ITGA5:ITGB1 interacts with ACE2. Interacts with TMEM182 and LAMB1. Interacts with tensin TNS3; TNS3 also interacts with PEAK1, thus acting as an adapter molecule to bridge the association of PEAK1 with ITGB1. Interacts with tensin TNS4; the interaction displaces tensin TNS3 from the ITGB1 cytoplasmic tail and promotes ITGB1 stability. Integrin ITGA9:ITGB1 interacts with SPP1/OPN (via N-terminus). Integrin ITGA9:ITGB1 interacts with TNC/TNFN3 (via the 3rd Fibronectin type-III domain). Integrins ITGA4:ITGB1 and ITGA9:ITGB1 interact with SVEP1 (via Sushi domain 21); thereby inhibit Ca(2+) intracellular signaling and as a result repress vasocontraction. ITGA4:ITGB1 and ITGA5:ITGB1 interacts with SELP. ITGA5:ITGB1 interacts with IGFBP1. ITGA4:ITGB1 interacts with BCAM. Interacts with ADGRG6.

It localises to the cell membrane. Its subcellular location is the cell projection. The protein resides in the invadopodium membrane. The protein localises to the ruffle membrane. It is found in the recycling endosome. It localises to the melanosome. Its subcellular location is the lamellipodium. The protein resides in the ruffle. The protein localises to the cell junction. It is found in the focal adhesion. In terms of biological role, integrins alpha-1/beta-1, alpha-2/beta-1, alpha-10/beta-1 and alpha-11/beta-1 are receptors for collagen. Integrins alpha-1/beta-1 and alpha-2/beta-2 recognize the proline-hydroxylated sequence G-F-P-G-E-R in collagen. Integrins alpha-2/beta-1, alpha-3/beta-1, alpha-4/beta-1, alpha-5/beta-1, alpha-8/beta-1, alpha-10/beta-1, alpha-11/beta-1 and alpha-V/beta-1 are receptors for fibronectin. Alpha-4/beta-1 recognizes one or more domains within the alternatively spliced CS-1 and CS-5 regions of fibronectin. Integrin alpha-5/beta-1 is a receptor for fibrinogen. Integrin alpha-1/beta-1, alpha-2/beta-1, alpha-6/beta-1 and alpha-7/beta-1 are receptors for lamimin. Integrin alpha-6/beta-1 (ITGA6:ITGB1) is present in oocytes and is involved in sperm-egg fusion. Integrin alpha-4/beta-1 is a receptor for VCAM1 and recognizes the sequence Q-I-D-S in VCAM1. Integrin alpha-9/beta-1 is a receptor for VCAM1, cytotactin and osteopontin. It recognizes the sequence A-E-I-D-G-I-E-L in cytotactin. Integrin alpha-3/beta-1 is a receptor for epiligrin, thrombospondin and CSPG4. Integrin alpha-3/beta-1 provides a docking site for FAP (seprase) at invadopodia plasma membranes in a collagen-dependent manner and hence may participate in the adhesion, formation of invadopodia and matrix degradation processes, promoting cell invasion. Alpha-3/beta-1 may mediate with LGALS3 the stimulation by CSPG4 of endothelial cells migration. Integrin alpha-V/beta-1 is a receptor for vitronectin. Beta-1 integrins recognize the sequence R-G-D in a wide array of ligands. When associated with alpha-7/beta-1 integrin, regulates cell adhesion and laminin matrix deposition. Involved in promoting endothelial cell motility and angiogenesis. Involved in osteoblast compaction through the fibronectin fibrillogenesis cell-mediated matrix assembly process and the formation of mineralized bone nodules. May be involved in up-regulation of the activity of kinases such as PKC via binding to KRT1. Together with KRT1 and RACK1, serves as a platform for SRC activation or inactivation. Plays a mechanistic adhesive role during telophase, required for the successful completion of cytokinesis. ITGA4:ITGB1 binds to fractalkine (CX3CL1) and may act as its coreceptor in CX3CR1-dependent fractalkine signaling. ITGA4:ITGB1 and ITGA5:ITGB1 bind to PLA2G2A via a site (site 2) which is distinct from the classical ligand-binding site (site 1) and this induces integrin conformational changes and enhanced ligand binding to site 1. ITGA5:ITGB1 acts as a receptor for fibrillin-1 (FBN1) and mediates R-G-D-dependent cell adhesion to FBN1. ITGA5:ITGB1 is a receptor for IL1B and binding is essential for IL1B signaling. ITGA5:ITGB3 is a receptor for soluble CD40LG and is required for CD40/CD40LG signaling. Plays an important role in myoblast differentiation and fusion during skeletal myogenesis. ITGA9:ITGB1 may play a crucial role in SVEP1/polydom-mediated myoblast cell adhesion. Integrins ITGA9:ITGB1 and ITGA4:ITGB1 repress PRKCA-mediated L-type voltage-gated channel Ca(2+) influx and ROCK-mediated calcium sensitivity in vascular smooth muscle cells via their interaction with SVEP1, thereby inhibit vasocontraction. The polypeptide is Integrin beta-1 (Itgb1) (Rattus norvegicus (Rat)).